The sequence spans 65 residues: MTKKLTIVKCPRCGTDVEWGEQSPHRPFCSKQCQMIDFGEWADEEKAIPGAPDMSDSDGWSEDQY.

Zn(2+) contacts are provided by Cys-10, Cys-13, Cys-29, and Cys-33. A disordered region spans residues 45 to 65; sequence EKAIPGAPDMSDSDGWSEDQY. The segment covering 55-65 has biased composition (acidic residues); the sequence is SDSDGWSEDQY.

This sequence belongs to the DNA gyrase inhibitor YacG family. As to quaternary structure, interacts with GyrB. It depends on Zn(2+) as a cofactor.

In terms of biological role, inhibits all the catalytic activities of DNA gyrase by preventing its interaction with DNA. Acts by binding directly to the C-terminal domain of GyrB, which probably disrupts DNA binding by the gyrase. The protein is DNA gyrase inhibitor YacG of Vibrio cholerae serotype O1 (strain ATCC 39315 / El Tor Inaba N16961).